The chain runs to 144 residues: Large ribosomal subunit protein uL15 (144 aa).

A disordered region spans residues Met-1–Gln-54. Positions Arg-21–Gly-31 are enriched in gly residues.

It belongs to the universal ribosomal protein uL15 family. Part of the 50S ribosomal subunit.

Binds to the 23S rRNA. The protein is Large ribosomal subunit protein uL15 of Salmonella enteritidis PT4 (strain P125109).